Here is a 456-residue protein sequence, read N- to C-terminus: Protein translocase subunit SecY (456 aa).

At 1-21 (MEQLKEKFEPLFSVLPQVKSP) the chain is on the cytoplasmic side. A helical transmembrane segment spans residues 22 to 48 (GYRVPFREKLKWTGIILVLYFFLAQIP). At 49–59 (LYGLSANAVDQ) the chain is on the extracellular side. The helical intramembrane region spans 60–67 (FAQFRAVL). The chain crosses the membrane as a discontinuously helical span at residues 60 to 88 (FAQFRAVLAGNFGSILTLGIGPIVSASII). The stretch at 68 to 79 (AGNFGSILTLGI) is an intramembrane region. The segment at residues 80-88 (GPIVSASII) is an intramembrane region (helical). Residues 89–109 (LQLLVGGKILKLDLSRHEDKA) lie on the Cytoplasmic side of the membrane. The chain crosses the membrane as a helical span at residues 110-134 (FFQGLQKLLAIVFTFFEALIFVLTG). The Extracellular portion of the chain corresponds to 135–141 (SLAPSAP). The helical transmembrane segment at 142-166 (QFVWVLILQLTIGGILIIFLDEVVS) threads the bilayer. The Cytoplasmic portion of the chain corresponds to 167 to 172 (KWGFGS). Residues 173–191 (GVGLFIAAGVSQEIIVGAF) traverse the membrane as a helical segment. Over 192 to 224 (NPLSAPTQPGVPAGRITGFLYLLFTGQSPDFQY) the chain is Extracellular. Residues 225-246 (YVLPVLALIAVFLVVVYAESMR) traverse the membrane as a helical segment. Over 247–275 (VEIPISMGGGKRLSRGAVGKYPLRFIYAS) the chain is Cytoplasmic. Residues 276-297 (NMPVILTSALLLNVQLLANVFQ) form a helical membrane-spanning segment. Topologically, residues 298–334 (KLGYPILGTVSNGQAVDGLAYLLTAPRSIDALILDPF) are extracellular. The helical transmembrane segment at 335–354 (RVVFYAVVFIGLCVLFAWLW) threads the bilayer. At 355–397 (VEISNIGPRHVARQLYQMGMQIPGFRSSRGQFEKILKRYIPTI) the chain is on the cytoplasmic side. A helical membrane pass occupies residues 398–416 (TILGGAFVGLLAFVADLTG). Topologically, residues 417 to 419 (SLG) are extracellular. The chain crosses the membrane as a helical span at residues 420-434 (GGTGVLLTVGIVYRL). The Cytoplasmic portion of the chain corresponds to 435-456 (YEEIAQEQLMDMHPILRSFLGD).

Belongs to the SecY/SEC61-alpha family. As to quaternary structure, component of the Sec protein translocase complex. Heterotrimer consisting of alpha (SecY), beta (SecG) and gamma (SecE) subunits. The heterotrimers can form oligomers, although 1 heterotrimer is thought to be able to translocate proteins. Interacts with the ribosome. May interact with SecDF, and other proteins may be involved.

It localises to the cell membrane. The central subunit of the protein translocation channel SecYEG. Consists of two halves formed by TMs 1-5 and 6-10. These two domains form a lateral gate at the front which open onto the bilayer between TMs 2 and 7, and are clamped together by SecE at the back. The channel is closed by both a pore ring composed of hydrophobic SecY resides and a short helix (helix 2A) on the extracellular side of the membrane which forms a plug. The plug probably moves laterally to allow the channel to open. The ring and the pore may move independently. The polypeptide is Protein translocase subunit SecY (Methanothermobacter thermautotrophicus (strain ATCC 29096 / DSM 1053 / JCM 10044 / NBRC 100330 / Delta H) (Methanobacterium thermoautotrophicum)).